The following is a 373-amino-acid chain: Ferroptosis suppressor protein 1 (373 aa).

The N-myristoyl glycine moiety is linked to residue glycine 2. A helical transmembrane segment spans residues 13–29; it reads VVVVGGGFGGTAAASLL. 6-hydroxy-FAD contacts are provided by residues 17 to 21, arginine 53, and valine 81; that span reads GGGFG. An N6-acetyllysine modification is found at lysine 167. Residue aspartate 284 participates in 6-hydroxy-FAD binding.

Belongs to the FAD-dependent oxidoreductase family. It depends on 6-hydroxy-FAD as a cofactor. N-myristoylation at Gly-2 mediates the recruitment to lipid droplets and plasma membrane. Post-translationally, acetylation at Lys-167 prevents AIFM2 ubiquitination and degradation, thereby inhibiting ferroptosis. KAT2B mediates acetylation at Lys-167, while HDAC3 removes it. In terms of processing, ubiquitinated. AIFM2 undergoes 'Lys-29'-ubiquitination and proteasomal degradation, which is inhibited by acetylation at Lys-167.

Its subcellular location is the lipid droplet. It is found in the cell membrane. It localises to the cytoplasm. The protein resides in the mitochondrion membrane. The protein localises to the nucleus. The catalysed reaction is ubiquinone-10 + NADH + H(+) = ubiquinol-10 + NAD(+). It catalyses the reaction phylloquinone + NADH + H(+) = phylloquinol + NAD(+). The enzyme catalyses menaquinone-4 + NADH + H(+) = menaquinol-4 + NAD(+). It carries out the reaction menadione + NADH + H(+) = menadiol + NAD(+). With respect to regulation, the modification by 4-hydroxy-2-nonenal (HNE) adduction in mitochondria results in loss of the oxidoreductase activity and activation of a novel function in mitochondrial oxidative stress signaling. Functionally, a NAD(P)H-dependent oxidoreductase that acts as a key inhibitor of ferroptosis. At the plasma membrane, catalyzes reduction of coenzyme Q/ubiquinone-10 to ubiquinol-10, a lipophilic radical-trapping antioxidant that prevents lipid oxidative damage and consequently ferroptosis. Acts in parallel to GPX4 to suppress phospholipid peroxidation and ferroptosis. This anti-ferroptotic function is independent of cellular glutathione levels. Also acts as a potent radical-trapping antioxidant by mediating warfarin-resistant vitamin K reduction in the canonical vitamin K cycle: catalyzes NAD(P)H-dependent reduction of vitamin K (phylloquinone, menaquinone-4 and menadione) to hydroquinone forms. Hydroquinones act as potent radical-trapping antioxidants inhibitor of phospholipid peroxidation and ferroptosis. May play a role in mitochondrial stress signaling. Upon oxidative stress, associates with the lipid peroxidation end product 4-hydroxy-2-nonenal (HNE) forming a lipid adduct devoid of oxidoreductase activity, which then translocates from mitochondria into the nucleus triggering DNA damage and cell death. This chain is Ferroptosis suppressor protein 1 (AIFM2), found in Taeniopygia guttata (Zebra finch).